The following is a 449-amino-acid chain: UDP-N-acetylmuramoylalanine--D-glutamate ligase (449 aa).

113–119 contributes to the ATP binding site; that stretch reads GTNGKTT.

Belongs to the MurCDEF family.

The protein resides in the cytoplasm. It catalyses the reaction UDP-N-acetyl-alpha-D-muramoyl-L-alanine + D-glutamate + ATP = UDP-N-acetyl-alpha-D-muramoyl-L-alanyl-D-glutamate + ADP + phosphate + H(+). It functions in the pathway cell wall biogenesis; peptidoglycan biosynthesis. Functionally, cell wall formation. Catalyzes the addition of glutamate to the nucleotide precursor UDP-N-acetylmuramoyl-L-alanine (UMA). In Microcystis aeruginosa (strain NIES-843 / IAM M-2473), this protein is UDP-N-acetylmuramoylalanine--D-glutamate ligase.